Reading from the N-terminus, the 246-residue chain is Probable phosphatase Ssed_2939 (246 aa).

Positions 8, 10, 16, 41, 74, 102, 132, 193, and 195 each coordinate Zn(2+).

This sequence belongs to the PHP family. Requires Zn(2+) as cofactor.

In Shewanella sediminis (strain HAW-EB3), this protein is Probable phosphatase Ssed_2939.